Consider the following 265-residue polypeptide: tRNA pseudouridine synthase A (265 aa).

D53 (nucleophile) is an active-site residue. A substrate-binding site is contributed by Y111.

The protein belongs to the tRNA pseudouridine synthase TruA family. As to quaternary structure, homodimer.

It carries out the reaction uridine(38/39/40) in tRNA = pseudouridine(38/39/40) in tRNA. Functionally, formation of pseudouridine at positions 38, 39 and 40 in the anticodon stem and loop of transfer RNAs. The sequence is that of tRNA pseudouridine synthase A from Acinetobacter baumannii (strain ATCC 17978 / DSM 105126 / CIP 53.77 / LMG 1025 / NCDC KC755 / 5377).